A 420-amino-acid chain; its full sequence is Histidine--tRNA ligase, chloroplastic (420 aa).

This sequence belongs to the class-II aminoacyl-tRNA synthetase family.

The protein resides in the plastid. It is found in the chloroplast. The catalysed reaction is tRNA(His) + L-histidine + ATP = L-histidyl-tRNA(His) + AMP + diphosphate + H(+). This chain is Histidine--tRNA ligase, chloroplastic, found in Gracilaria tenuistipitata var. liui (Red alga).